The primary structure comprises 292 residues: Shikimate dehydrogenase (NADP(+)) (292 aa).

Shikimate contacts are provided by residues 22 to 24 (SLS) and Ser-69. Catalysis depends on Lys-73, which acts as the Proton acceptor. Shikimate contacts are provided by Asn-94 and Asp-111. NADP(+) contacts are provided by residues 135-139 (GVGGA) and Ile-236. Tyr-238 is a shikimate binding site. Gly-260 contributes to the NADP(+) binding site.

The protein belongs to the shikimate dehydrogenase family. In terms of assembly, homodimer.

The enzyme catalyses shikimate + NADP(+) = 3-dehydroshikimate + NADPH + H(+). It functions in the pathway metabolic intermediate biosynthesis; chorismate biosynthesis; chorismate from D-erythrose 4-phosphate and phosphoenolpyruvate: step 4/7. In terms of biological role, involved in the biosynthesis of the chorismate, which leads to the biosynthesis of aromatic amino acids. Catalyzes the reversible NADPH linked reduction of 3-dehydroshikimate (DHSA) to yield shikimate (SA). The chain is Shikimate dehydrogenase (NADP(+)) from Streptococcus pyogenes serotype M28 (strain MGAS6180).